Here is a 564-residue protein sequence, read N- to C-terminus: Zyxin (564 aa).

Alanine 2 bears the N-acetylalanine mark. Residues 30 to 141 form a disordered region; the sequence is VAPKPKVNPF…TQLPPQPREK (112 aa). Pro residues-rich tracts occupy residues 63–78 and 93–109; these read IPPP…PPPL and FPPP…PPAP. Residues serine 117, serine 144, serine 170, and serine 171 each carry the phosphoserine modification. Residues 162–344 form a disordered region; that stretch reads NDPFKARVSS…RSPGGPGPLT (183 aa). 2 stretches are compositionally biased toward pro residues: residues 174 to 189 and 197 to 214; these read VPPP…PSTK and PLPP…PQPQ. At threonine 180 the chain carries Phosphothreonine. A compositionally biased stretch (polar residues) spans 234 to 243; the sequence is QPVSSANTQP. Arginine 244 bears the Asymmetric dimethylarginine mark. The span at 255–275 shows a compositional bias: low complexity; sequence PKFAPVAPKFTPVVSKFSPGA. Residues lysine 256 and lysine 263 each carry the N6-acetyllysine modification. Threonine 265 carries the post-translational modification Phosphothreonine. Position 270 is an N6-acetyllysine (lysine 270). 2 positions are modified to phosphoserine: serine 272 and serine 300. The span at 294–310 shows a compositional bias: polar residues; it reads SSVSTGSPQPPSFTYAQ. Residues 311 to 322 are compositionally biased toward basic and acidic residues; it reads QKEKPLVQEKQH. The residue at position 336 (serine 336) is a Phosphoserine. 3 consecutive LIM zinc-binding domains span residues 376–435, 436–495, and 496–562; these read CGKC…TLEK, CNTC…YAPR, and CSVC…SARA.

The protein belongs to the zyxin/ajuba family. In terms of assembly, interacts, via the Pro-rich regions, with the EVH1 domains of ENAH, EVL and VASP. Interacts with the first LIM domain of TES. Interacts with SYNPO2.

Its subcellular location is the cytoplasm. The protein resides in the cytoskeleton. The protein localises to the cell junction. It is found in the focal adhesion. It localises to the nucleus. Its function is as follows. Adhesion plaque protein. Binds alpha-actinin and the CRP protein. Important for targeting TES and ENA/VASP family members to focal adhesions and for the formation of actin-rich structures. May be a component of a signal transduction pathway that mediates adhesion-stimulated changes in gene expression. The chain is Zyxin (Zyx) from Mus musculus (Mouse).